We begin with the raw amino-acid sequence, 171 residues long: S-ribosylhomocysteine lyase (171 aa).

Histidine 54, histidine 58, and cysteine 128 together coordinate Fe cation.

This sequence belongs to the LuxS family. Homodimer. It depends on Fe cation as a cofactor.

The enzyme catalyses S-(5-deoxy-D-ribos-5-yl)-L-homocysteine = (S)-4,5-dihydroxypentane-2,3-dione + L-homocysteine. Involved in the synthesis of autoinducer 2 (AI-2) which is secreted by bacteria and is used to communicate both the cell density and the metabolic potential of the environment. The regulation of gene expression in response to changes in cell density is called quorum sensing. Catalyzes the transformation of S-ribosylhomocysteine (RHC) to homocysteine (HC) and 4,5-dihydroxy-2,3-pentadione (DPD). The sequence is that of S-ribosylhomocysteine lyase from Shigella flexneri.